A 641-amino-acid polypeptide reads, in one-letter code: Transcription termination factor MTERF2, chloroplastic (641 aa).

Disordered stretches follow at residues 54-80 (LKLN…DLDG) and 606-641 (FEAG…DLTE). The span at 610-641 (LDSEDSQPSDENISDQEIAFSDEAEEEEDLTE) shows a compositional bias: acidic residues.

This sequence belongs to the mTERF family.

It localises to the plastid. The protein localises to the chloroplast. Its function is as follows. Transcription termination factor involved in processing of plastid transcripts. Essential for embryogenesis. The protein is Transcription termination factor MTERF2, chloroplastic of Arabidopsis thaliana (Mouse-ear cress).